A 201-amino-acid chain; its full sequence is Potassium-transporting ATPase KdpC subunit (201 aa).

A helical transmembrane segment spans residues 9 to 29 (ILVMLALTLITGLLYPLAMTV). Polar residues-rich tracts occupy residues 73–84 (TTAADPNDSTKT) and 91–101 (AANSSGSNLGP). A disordered region spans residues 73-103 (TTAADPNDSTKTVPAPYNAANSSGSNLGPTS).

This sequence belongs to the KdpC family. In terms of assembly, the system is composed of three essential subunits: KdpA, KdpB and KdpC.

Its subcellular location is the cell inner membrane. Functionally, part of the high-affinity ATP-driven potassium transport (or Kdp) system, which catalyzes the hydrolysis of ATP coupled with the electrogenic transport of potassium into the cytoplasm. This subunit acts as a catalytic chaperone that increases the ATP-binding affinity of the ATP-hydrolyzing subunit KdpB by the formation of a transient KdpB/KdpC/ATP ternary complex. The chain is Potassium-transporting ATPase KdpC subunit from Bradyrhizobium sp. (strain BTAi1 / ATCC BAA-1182).